The following is a 134-amino-acid chain: Profilin-4 (134 aa).

Residues Cys13 and Cys118 are joined by a disulfide bond. The Involved in PIP2 interaction signature appears at 84-100 (AVIRGKKGSGGITIKKT). The residue at position 114 (Thr114) is a Phosphothreonine.

Belongs to the profilin family. Occurs in many kinds of cells as a complex with monomeric actin in a 1:1 ratio. In terms of processing, phosphorylated by MAP kinases.

Its subcellular location is the cytoplasm. The protein localises to the cytoskeleton. Its function is as follows. Binds to actin and affects the structure of the cytoskeleton. At high concentrations, profilin prevents the polymerization of actin, whereas it enhances it at low concentrations. The polypeptide is Profilin-4 (Olea europaea (Common olive)).